Consider the following 398-residue polypeptide: Proton-coupled antiporter flippase LtaA (398 aa).

Helical transmembrane passes span 15-40 (FIIM…LALL), 46-73 (IAVG…GFLL), 80-99 (LVLT…VIWF), 105-126 (VLIA…IMLA), 138-159 (GYVY…NVIF), 165-184 (QFAF…YYFV), 212-234 (ILFP…LPTY), 246-264 (YTMA…MLFL), 276-297 (MYWV…LSLI), 303-326 (VWVL…TFMA), 338-359 (WGVF…GGLI), and 371-389 (YFSA…IYFV).

It belongs to the major facilitator superfamily. LtaA family.

It is found in the cell membrane. Its pathway is cell wall biogenesis; lipoteichoic acid biosynthesis. Functionally, proton-coupled antiporter flippase that catalyzes the translocation, from the inner to the outer leaflet of the cell membrane, of the lipid-linked disaccharide (anchor-LLD) that anchors lipoteichoic acids (LTA) to the cell membrane. This is Proton-coupled antiporter flippase LtaA (ltaA) from Staphylococcus saprophyticus subsp. saprophyticus (strain ATCC 15305 / DSM 20229 / NCIMB 8711 / NCTC 7292 / S-41).